The primary structure comprises 234 residues: 2-C-methyl-D-erythritol 4-phosphate cytidylyltransferase (234 aa).

The protein belongs to the IspD/TarI cytidylyltransferase family. IspD subfamily.

It catalyses the reaction 2-C-methyl-D-erythritol 4-phosphate + CTP + H(+) = 4-CDP-2-C-methyl-D-erythritol + diphosphate. Its pathway is isoprenoid biosynthesis; isopentenyl diphosphate biosynthesis via DXP pathway; isopentenyl diphosphate from 1-deoxy-D-xylulose 5-phosphate: step 2/6. Catalyzes the formation of 4-diphosphocytidyl-2-C-methyl-D-erythritol from CTP and 2-C-methyl-D-erythritol 4-phosphate (MEP). This is 2-C-methyl-D-erythritol 4-phosphate cytidylyltransferase from Thermosynechococcus vestitus (strain NIES-2133 / IAM M-273 / BP-1).